The following is a 147-amino-acid chain: Hemoglobin subunit deltaH (147 aa).

The region spanning 3 to 147 is the Globin domain; the sequence is RLTDSEKAEV…MANALAHKYH (145 aa). 2 residues coordinate heme b: His64 and His93.

This sequence belongs to the globin family. In terms of assembly, heterotetramer of two delta chains and two alpha chains. As to expression, red blood cells.

This Procavia capensis (Rock hyrax) protein is Hemoglobin subunit deltaH.